A 242-amino-acid chain; its full sequence is Beta-glucanase (242 aa).

A signal peptide spans 1-28; it reads MPYLKRVLLLLVTGLFMSLFAVTATASA. Residue Gln-29 is modified to Pyrrolidone carboxylic acid. Positions 29 to 242 constitute a GH16 domain; the sequence is QTGGSFFDPF…HYDWVRYTKK (214 aa). A disulfide bridge connects residues Cys-60 and Cys-89. Residue Glu-133 is the Nucleophile of the active site. Glu-137 functions as the Proton donor in the catalytic mechanism.

It belongs to the glycosyl hydrolase 16 family.

It is found in the secreted. It carries out the reaction Hydrolysis of (1-&gt;4)-beta-D-glucosidic linkages in beta-D-glucans containing (1-&gt;3)- and (1-&gt;4)-bonds.. The sequence is that of Beta-glucanase (bglS) from Bacillus subtilis (strain 168).